Reading from the N-terminus, the 38-residue chain is Bacteriocin curvaticin FS47 (38 aa).

The protein localises to the secreted. Its function is as follows. Bacteriocin active against Listeria monocytogenes, Pediococcus, Enterococcus, Lactobacilli and Bacilli. This is Bacteriocin curvaticin FS47 from Latilactobacillus curvatus (Lactobacillus curvatus).